Here is a 313-residue protein sequence, read N- to C-terminus: Putative S-adenosyl-L-methionine-dependent methyltransferase MAV_5150 (313 aa).

Residues Asp139 and 168-169 contribute to the S-adenosyl-L-methionine site; that span reads DL.

The protein belongs to the UPF0677 family.

Exhibits S-adenosyl-L-methionine-dependent methyltransferase activity. The chain is Putative S-adenosyl-L-methionine-dependent methyltransferase MAV_5150 from Mycobacterium avium (strain 104).